A 441-amino-acid chain; its full sequence is Inner kinetochore subunit mis17 (441 aa).

Polar residues predominate over residues 160-173 (SSILENSPPNKVQR). The interval 160–240 (SSILENSPPN…TSSMAPRNLL (81 aa)) is disordered. Over residues 174 to 183 (LSSLDSSQDS) the composition is skewed to low complexity. A compositionally biased stretch (polar residues) spans 192 to 201 (VTGTTFSSQA). A compositionally biased stretch (low complexity) spans 217 to 233 (SLTNQSSSLQSSLQTSS).

Belongs to the CENP-U/AME1 family. Component of the heterotetrameric kinetochore subcomplex COMA, which consists of fta2, fta7, mal2 and mis17. The COMA subcomplex is part of a larger constitutive centromere-associated network (CCAN) (also known as central kinetochore Sim4 complex in fission yeast), which is composed of at least cnl2, cnp3, cnp20, fta1, fta2, fta3, fta4, fta6, fta7, mal2, mhf1, mhf2, mis6, mis15, mis17, sim4 and wip1. Interacts with mis6 and mis15.

The protein localises to the nucleus. It localises to the chromosome. The protein resides in the centromere. Its subcellular location is the kinetochore. In terms of biological role, component of the kinetochore, a multiprotein complex that assembles on centromeric DNA and attaches chromosomes to spindle microtubules, mediating chromosome segregation and sister chromatid segregation during meiosis and mitosis. Component of the inner kinetochore COMA complex, which connects centromere-associated proteins and the outer kinetochore. COMA interacts with other inner kinetochore proteins to form the inner kinetochore constitutive centromere-associated network (CCAN), which serves as a structural platform for outer kinetochore assembly. The protein is Inner kinetochore subunit mis17 (mis17) of Schizosaccharomyces pombe (strain 972 / ATCC 24843) (Fission yeast).